Consider the following 346-residue polypeptide: [LysW]-lysine/[LysW]-ornithine hydrolase (346 aa).

Zn(2+) is bound at residue His-68. The active site involves Asp-70. Asp-92 contacts Zn(2+). Glu-122 serves as the catalytic Proton acceptor. Residues Glu-123, Glu-146, and His-317 each coordinate Zn(2+).

This sequence belongs to the peptidase M20A family. LysK subfamily. Zn(2+) serves as cofactor. It depends on Co(2+) as a cofactor.

The protein localises to the cytoplasm. The catalysed reaction is [amino-group carrier protein]-C-terminal-gamma-(L-lysyl)-L-glutamate + H2O = [amino-group carrier protein]-C-terminal-L-glutamate + L-lysine. It carries out the reaction [amino-group carrier protein]-C-terminal-gamma-(L-ornithyl)-L-glutamate + H2O = [amino-group carrier protein]-C-terminal-L-glutamate + L-ornithine. The protein operates within amino-acid biosynthesis; L-lysine biosynthesis via AAA pathway; L-lysine from L-alpha-aminoadipate (Thermus route): step 5/5. It participates in amino-acid biosynthesis; L-arginine biosynthesis. In terms of biological role, catalyzes the release of L-lysine from [LysW]-gamma-L-lysine and the release of L-ornithine from [LysW]-L-ornithine. In Saccharolobus islandicus (strain Y.G.57.14 / Yellowstone #1) (Sulfolobus islandicus), this protein is [LysW]-lysine/[LysW]-ornithine hydrolase.